Consider the following 607-residue polypeptide: CUB and zona pellucida-like domain-containing protein 1 (607 aa).

Residues 1–19 (MEVTGRLFIWAILAVSCRA) form the signal peptide. The Lumenal segment spans residues 20–568 (QLNSTAAEGR…AEISKQPLSH (549 aa)). Asparagine 22 carries N-linked (GlcNAc...) asparagine glycosylation. Cysteines 32 and 58 form a disulfide. 2 consecutive CUB domains span residues 32-146 (CTAS…YFFS) and 154-265 (CGGY…YAST). Asparagine 67 carries N-linked (GlcNAc...) asparagine glycosylation. Intrachain disulfides connect cysteine 85–cysteine 107 and cysteine 154–cysteine 180. Asparagine 195 carries an N-linked (GlcNAc...) asparagine glycan. A disulfide bond links cysteine 207 and cysteine 229. Residues 276 to 519 (SCASDKMRVI…SRCNQGCVSR (244 aa)) enclose the ZP domain. A glycan (N-linked (GlcNAc...) asparagine) is linked at asparagine 419. Cysteine 442 and cysteine 498 form a disulfide bridge. A helical membrane pass occupies residues 569-589 (LHLFSFMVLALNVVIVVTATV). Over 590–607 (RHFLNRWKDHGYQKLQVY) the chain is Cytoplasmic.

As to expression, expressed predominantly in epithelium of uterus and oviduct.

It localises to the zymogen granule membrane. Its function is as follows. Localized to zymogen granules, where it functions in trypsinogen activation. May indirectly regulate cell motility, cell-cell and cell/extracellular matrix interactions. This is CUB and zona pellucida-like domain-containing protein 1 from Rattus norvegicus (Rat).